The primary structure comprises 889 residues: DNA mismatch repair protein MutS (889 aa).

622–629 (GPNMAGKS) lines the ATP pocket. Positions 869–889 (QRVKRPEKAPADVTAETEDQE) are disordered.

This sequence belongs to the DNA mismatch repair MutS family.

This protein is involved in the repair of mismatches in DNA. It is possible that it carries out the mismatch recognition step. This protein has a weak ATPase activity. The protein is DNA mismatch repair protein MutS of Desulfatibacillum aliphaticivorans.